A 291-amino-acid chain; its full sequence is Malectin (291 aa).

The N-terminal stretch at 1–30 (MLRPRGAEGTAVALLRLLLLLLLLGPKLRG) is a signal peptide. Over 31-268 (PGLGVVGAAG…TPNPYASDNS (238 aa)) the chain is Lumenal. Residues Tyr81, Tyr103, Tyr130, Phe131, and Asp200 each coordinate a carbohydrate. A disordered region spans residues 220–264 (LQPHPGLEKKEEEEEEEEYDEGSNLKRQTNKNRVQSGPRTPNPYA). Residues 230 to 240 (EEEEEEEEYDE) are compositionally biased toward acidic residues. Over residues 244–264 (LKRQTNKNRVQSGPRTPNPYA) the composition is skewed to polar residues. Asn267 is a glycosylation site (N-linked (GlcNAc...) asparagine). A helical transmembrane segment spans residues 269-289 (SLMFPILVAFGVFIPTLFCLC). The Cytoplasmic segment spans residues 290 to 291 (RL).

It belongs to the malectin family. In terms of assembly, interacts with the oligosaccharyltransferase (OST) complex.

It is found in the endoplasmic reticulum membrane. Its function is as follows. Carbohydrate-binding protein with a strong ligand preference for Glc2-N-glycan. May play a role in the early steps of protein N-glycosylation. The polypeptide is Malectin (Mus musculus (Mouse)).